A 288-amino-acid polypeptide reads, in one-letter code: Pyridoxal kinase PdxY (288 aa).

Residues serine 12 and 47-48 each bind substrate; that span reads TQ. Residues aspartate 114, glutamate 151, lysine 184, and 211–214 contribute to the ATP site; that span reads RPLL. Aspartate 225 lines the substrate pocket.

Belongs to the pyridoxine kinase family. PdxY subfamily. In terms of assembly, homodimer. Mg(2+) is required as a cofactor.

The catalysed reaction is pyridoxal + ATP = pyridoxal 5'-phosphate + ADP + H(+). Its pathway is cofactor metabolism; pyridoxal 5'-phosphate salvage; pyridoxal 5'-phosphate from pyridoxal: step 1/1. In terms of biological role, pyridoxal kinase involved in the salvage pathway of pyridoxal 5'-phosphate (PLP). Catalyzes the phosphorylation of pyridoxal to PLP. This Pseudomonas savastanoi pv. phaseolicola (strain 1448A / Race 6) (Pseudomonas syringae pv. phaseolicola (strain 1448A / Race 6)) protein is Pyridoxal kinase PdxY.